A 121-amino-acid chain; its full sequence is Small ribosomal subunit protein uS13 (121 aa).

The tract at residues 91–121 (HRRGLPVRGQKTKNNARTRKGPVKTVANKKK) is disordered.

This sequence belongs to the universal ribosomal protein uS13 family. In terms of assembly, part of the 30S ribosomal subunit. Forms a loose heterodimer with protein S19. Forms two bridges to the 50S subunit in the 70S ribosome.

Located at the top of the head of the 30S subunit, it contacts several helices of the 16S rRNA. In the 70S ribosome it contacts the 23S rRNA (bridge B1a) and protein L5 of the 50S subunit (bridge B1b), connecting the 2 subunits; these bridges are implicated in subunit movement. Contacts the tRNAs in the A and P-sites. The sequence is that of Small ribosomal subunit protein uS13 from Staphylococcus carnosus (strain TM300).